An 823-amino-acid polypeptide reads, in one-letter code: Protein phosphatase 1 regulatory subunit 29 (823 aa).

An N-terminal signal peptide occupies residues 1–22; the sequence is MLRLGLCAAALLCVCQPGAVRA. Residues 23–397 are Extracellular-facing; the sequence is DCWLIEGDKG…APSTSTTTHY (375 aa). Residue Asn-54 is glycosylated (N-linked (GlcNAc...) asparagine). LRR repeat units lie at residues 56 to 77, 80 to 101, 104 to 125, 128 to 149, and 152 to 173; these read TVHD…SLNR, NLTD…AFLG, SLQV…MLRG, RLQF…AFSE, and SLIS…TFAS. N-linked (GlcNAc...) asparagine glycosylation is found at Asn-80, Asn-85, and Asn-117. Residues 185-247 form the LRRCT domain; the sequence is NPFNCECDLF…ITVLQAKCRN (63 aa). Asn-205 and Asn-247 each carry an N-linked (GlcNAc...) asparagine glycan. The interval 249–294 is disordered; that stretch reads SMPARPVSHPTPYSTDAQREPDENSGFNPDEILSVEPPASSTTDAS. Residues 292–379 form the Fibronectin type-III domain; that stretch reads DASAGPAIKL…FNHTCLTFTT (88 aa). Residues 398-418 traverse the membrane as a helical segment; it reads IMTILGCLFGMVIVLGAVYYC. At 419–823 the chain is on the cytoplasmic side; the sequence is LRKRRMQEEK…WKGVSAQQKL (405 aa). The interval 590 to 624 is disordered; the sequence is ASSAATPGALERPSFLSPPYKESSHHPLQRQLSAD. Phosphoserine occurs at positions 622, 671, and 675.

As to quaternary structure, interacts with PPP1CA.

The protein localises to the membrane. Inhibits phosphatase activity of protein phosphatase 1 (PP1) complexes. The chain is Protein phosphatase 1 regulatory subunit 29 (Elfn2) from Mus musculus (Mouse).